The sequence spans 422 residues: 2-oxoglutarate and iron-dependent oxygenase JMJD4 (422 aa).

Positions 139 to 298 constitute a JmjC domain; the sequence is QRNFPEHNIY…IMWQFLQDEL (160 aa). 3 residues coordinate Fe cation: histidine 186, aspartate 188, and histidine 266.

It belongs to the JMJD6 family. The cofactor is Fe(2+).

The protein resides in the cytoplasm. The enzyme catalyses L-lysyl-[protein] + 2-oxoglutarate + O2 = 4-hydroxy-L-lysyl-[protein] + succinate + CO2. Catalyzes the 2-oxoglutarate and iron-dependent C4-lysyl hydroxylation of ETF1 at 'Lys-63' thereby promoting the translational termination efficiency of ETF1. The chain is 2-oxoglutarate and iron-dependent oxygenase JMJD4 (jmjd4) from Danio rerio (Zebrafish).